Reading from the N-terminus, the 156-residue chain is Small ribosomal subunit protein uS7 (156 aa).

Belongs to the universal ribosomal protein uS7 family. In terms of assembly, part of the 30S ribosomal subunit. Contacts proteins S9 and S11.

In terms of biological role, one of the primary rRNA binding proteins, it binds directly to 16S rRNA where it nucleates assembly of the head domain of the 30S subunit. Is located at the subunit interface close to the decoding center, probably blocks exit of the E-site tRNA. This Parvibaculum lavamentivorans (strain DS-1 / DSM 13023 / NCIMB 13966) protein is Small ribosomal subunit protein uS7.